Consider the following 258-residue polypeptide: Pyridoxine 5'-phosphate synthase (258 aa).

Asparagine 6 provides a ligand contact to 3-amino-2-oxopropyl phosphate. 1-deoxy-D-xylulose 5-phosphate is bound at residue 8–9 (DH). Arginine 17 is a 3-amino-2-oxopropyl phosphate binding site. Residue histidine 42 is the Proton acceptor of the active site. Arginine 44 and histidine 49 together coordinate 1-deoxy-D-xylulose 5-phosphate. The active-site Proton acceptor is glutamate 69. Threonine 99 serves as a coordination point for 1-deoxy-D-xylulose 5-phosphate. Histidine 213 functions as the Proton donor in the catalytic mechanism. 3-amino-2-oxopropyl phosphate contacts are provided by residues glycine 214 and 235–236 (GQ).

It belongs to the PNP synthase family. In terms of assembly, homooctamer; tetramer of dimers.

The protein resides in the cytoplasm. It catalyses the reaction 3-amino-2-oxopropyl phosphate + 1-deoxy-D-xylulose 5-phosphate = pyridoxine 5'-phosphate + phosphate + 2 H2O + H(+). It functions in the pathway cofactor biosynthesis; pyridoxine 5'-phosphate biosynthesis; pyridoxine 5'-phosphate from D-erythrose 4-phosphate: step 5/5. Functionally, catalyzes the complicated ring closure reaction between the two acyclic compounds 1-deoxy-D-xylulose-5-phosphate (DXP) and 3-amino-2-oxopropyl phosphate (1-amino-acetone-3-phosphate or AAP) to form pyridoxine 5'-phosphate (PNP) and inorganic phosphate. This is Pyridoxine 5'-phosphate synthase from Sulfurovum sp. (strain NBC37-1).